A 535-amino-acid chain; its full sequence is Xylan 1,3-beta-xylosidase (535 aa).

The Proton acceptor role is filled by Asp-16. Glu-189 (proton donor) is an active-site residue.

Belongs to the glycosyl hydrolase 43 family.

It catalyses the reaction Hydrolysis of successive xylose residues from the non-reducing termini of (1-&gt;3)-beta-D-xylans.. Inhibited by Ag(+), Cu(2+), Hg(2+), Mn(2+), Pb(2+), Zn(2+) and p-chloromercuric benzoic acid. Functionally, beta-1,3-xylosidase that hydrolyzes beta-1,3-xylooligosaccharides to D-xylose. The protein is Xylan 1,3-beta-xylosidase (xloA) of Vibrio sp.